A 323-amino-acid chain; its full sequence is Aldo-keto reductase family 1 member C3 (323 aa).

NADP(+) is bound by residues 20 to 24 (GFGTY) and D50. The Proton donor role is filled by Y55. H117 contributes to the substrate binding site. Residues 166–167 (SN), Q190, 216–221 (YSALGS), and 270–280 (KSYNEQRIREN) each bind NADP(+).

The protein belongs to the aldo/keto reductase family.

It is found in the cytoplasm. The catalysed reaction is a 3alpha-hydroxysteroid + NADP(+) = a 3-oxosteroid + NADPH + H(+). It catalyses the reaction a 3alpha-hydroxysteroid + NAD(+) = a 3-oxosteroid + NADH + H(+). The enzyme catalyses prostaglandin F2alpha + NADP(+) = prostaglandin D2 + NADPH + H(+). It carries out the reaction testosterone + NAD(+) = androst-4-ene-3,17-dione + NADH + H(+). The catalysed reaction is testosterone + NADP(+) = androst-4-ene-3,17-dione + NADPH + H(+). It catalyses the reaction prostaglandin F2alpha + NADP(+) = prostaglandin H2 + NADPH + H(+). The enzyme catalyses prostaglandin D2 + NADPH + H(+) = 11beta-prostaglandin F2 + NADP(+). It carries out the reaction prostaglandin D2-ethanolamide + NADPH + H(+) = 11beta-prostaglandin F2-ethanolamide + NADP(+). The catalysed reaction is 17beta-estradiol + NADP(+) = estrone + NADPH + H(+). It catalyses the reaction 17beta-estradiol + NAD(+) = estrone + NADH + H(+). The enzyme catalyses (20S)-hydroxypregn-4-en-3-one + NADP(+) = progesterone + NADPH + H(+). It carries out the reaction (20S)-hydroxypregn-4-en-3-one + NAD(+) = progesterone + NADH + H(+). The catalysed reaction is 5alpha-androstane-3alpha,17beta-diol + NADP(+) = 17beta-hydroxy-5alpha-androstan-3-one + NADPH + H(+). It catalyses the reaction 5alpha-androstane-3alpha,17beta-diol + NAD(+) = 17beta-hydroxy-5alpha-androstan-3-one + NADH + H(+). The enzyme catalyses androsterone + NADPH + H(+) = 5alpha-androstane-3alpha,17beta-diol + NADP(+). It carries out the reaction 5alpha-androstane-3alpha,17beta-diol + NAD(+) = androsterone + NADH + H(+). The catalysed reaction is 5alpha-androstane-3beta,17beta-diol + NADP(+) = 17beta-hydroxy-5alpha-androstan-3-one + NADPH + H(+). It catalyses the reaction 9-cis-retinol + NADP(+) = 9-cis-retinal + NADPH + H(+). The protein operates within steroid metabolism. Functionally, cytosolic aldo-keto reductase that catalyzes the NADH and NADPH-dependent reduction of ketosteroids to hydroxysteroids. Acts as a NAD(P)(H)-dependent 3-, 17- and 20-ketosteroid reductase on the steroid nucleus and side chain and regulates the metabolism of androgens, estrogens and progesterone. Displays the ability to catalyze both oxidation and reduction in vitro, but most probably acts as a reductase in vivo since the oxidase activity measured in vitro is inhibited by physiological concentration of NADPH. Acts preferentially as a 17-ketosteroid reductase and has the highest catalytic efficiency of the AKR1C enzyme for the reduction of delta4-androstenedione to form testosterone. Reduces prostaglandin (PG) D2 to 11beta-prostaglandin F2, progesterone to 20alpha-hydroxyprogesterone and estrone to 17beta-estradiol. Catalyzes the transformation of the potent androgen dihydrotestosterone (DHT) into the less active form, 5-alpha-androstan-3-alpha,17-beta-diol (3-alpha-diol). Also displays retinaldehyde reductase activity toward 9-cis-retinal. This Pongo abelii (Sumatran orangutan) protein is Aldo-keto reductase family 1 member C3 (AKR1C3).